The primary structure comprises 510 residues: ATP synthase subunit alpha (510 aa).

Residue 169–176 (GDRQTGKT) coordinates ATP.

The protein belongs to the ATPase alpha/beta chains family. In terms of assembly, F-type ATPases have 2 components, CF(1) - the catalytic core - and CF(0) - the membrane proton channel. CF(1) has five subunits: alpha(3), beta(3), gamma(1), delta(1), epsilon(1). CF(0) has three main subunits: a(1), b(2) and c(9-12). The alpha and beta chains form an alternating ring which encloses part of the gamma chain. CF(1) is attached to CF(0) by a central stalk formed by the gamma and epsilon chains, while a peripheral stalk is formed by the delta and b chains.

It localises to the cell inner membrane. The catalysed reaction is ATP + H2O + 4 H(+)(in) = ADP + phosphate + 5 H(+)(out). Its function is as follows. Produces ATP from ADP in the presence of a proton gradient across the membrane. The alpha chain is a regulatory subunit. The polypeptide is ATP synthase subunit alpha (Rickettsia rickettsii (strain Iowa)).